The primary structure comprises 102 residues: Putative pterin-4-alpha-carbinolamine dehydratase (102 aa).

This sequence belongs to the pterin-4-alpha-carbinolamine dehydratase family.

It carries out the reaction (4aS,6R)-4a-hydroxy-L-erythro-5,6,7,8-tetrahydrobiopterin = (6R)-L-erythro-6,7-dihydrobiopterin + H2O. The polypeptide is Putative pterin-4-alpha-carbinolamine dehydratase (Psychromonas ingrahamii (strain DSM 17664 / CCUG 51855 / 37)).